The chain runs to 597 residues: Cytosolic phospholipase A2 gamma (597 aa).

Positions 1–597 (MELSSGVCPA…FKKSHNISKD (597 aa)) constitute a PLA2c domain. The Nucleophile role is filled by Ser83. The Proton acceptor role is filled by Asp417. Residues 576–597 (RVKDPQGSQTVEFKKSHNISKD) form a disordered region. The segment covering 587 to 597 (EFKKSHNISKD) has biased composition (basic and acidic residues).

In terms of tissue distribution, highly expressed in ovary, where it localizes to oocytes in preantral and antral stage follicles (at protein level). Not detected in other tissues tested.

Its subcellular location is the nucleus. It localises to the nucleoplasm. It is found in the nucleus envelope. The protein resides in the cytoplasm. The protein localises to the cell cortex. Its subcellular location is the cytoskeleton. It localises to the spindle. The enzyme catalyses a 1,2-diacyl-sn-glycero-3-phosphocholine + H2O = a 1-acyl-sn-glycero-3-phosphocholine + a fatty acid + H(+). It catalyses the reaction a 1-O-alkyl-2-acyl-sn-glycero-3-phosphocholine + H2O = a 1-O-alkyl-sn-glycero-3-phosphocholine + a fatty acid + H(+). The catalysed reaction is 1,2-dihexadecanoyl-sn-glycero-3-phosphocholine + H2O = 1-hexadecanoyl-sn-glycero-3-phosphocholine + hexadecanoate + H(+). It carries out the reaction 1-hexadecanoyl-2-(9Z-octadecenoyl)-sn-glycero-3-phosphocholine + H2O = 1-hexadecanoyl-sn-glycero-3-phosphocholine + (9Z)-octadecenoate + H(+). The enzyme catalyses 1-hexadecanoyl-2-(9Z,12Z-octadecadienoyl)-sn-glycero-3-phosphocholine + H2O = (9Z,12Z)-octadecadienoate + 1-hexadecanoyl-sn-glycero-3-phosphocholine + H(+). It catalyses the reaction 1-hexadecanoyl-2-(5Z,8Z,11Z,14Z-eicosatetraenoyl)-sn-glycero-3-phosphocholine + H2O = 1-hexadecanoyl-sn-glycero-3-phosphocholine + (5Z,8Z,11Z,14Z)-eicosatetraenoate + H(+). The catalysed reaction is 1-O-hexadecyl-2-(5Z,8Z,11Z,14Z)-eicosatetraenoyl-sn-glycero-3-phosphocholine + H2O = 1-O-hexadecyl-sn-glycero-3-phosphocholine + (5Z,8Z,11Z,14Z)-eicosatetraenoate + H(+). It carries out the reaction 1-hexadecanoyl-2-(5Z,8Z,11Z,14Z-eicosatetraenoyl)-sn-glycero-3-phosphocholine + H2O = 2-(5Z,8Z,11Z,14Z)-eicosatetraenoyl-sn-glycero-3-phosphocholine + hexadecanoate + H(+). The enzyme catalyses a 1-acyl-sn-glycero-3-phosphocholine + H2O = sn-glycerol 3-phosphocholine + a fatty acid + H(+). It catalyses the reaction 1-hexadecanoyl-sn-glycero-3-phosphocholine + H2O = sn-glycerol 3-phosphocholine + hexadecanoate + H(+). The catalysed reaction is 2 1-hexadecanoyl-sn-glycero-3-phosphocholine = 1,2-dihexadecanoyl-sn-glycero-3-phosphocholine + sn-glycerol 3-phosphocholine. It carries out the reaction 1-hexadecanoyl-sn-glycero-3-phosphoethanolamine + 1-hexadecanoyl-sn-glycero-3-phosphocholine = 1,2-dihexadecanoyl-sn-glycero-3-phosphoethanolamine + sn-glycerol 3-phosphocholine. The enzyme catalyses 1-hexadecanoyl-sn-glycero-3-phosphoethanolamine + 1-hexadecanoyl-sn-glycero-3-phosphocholine = sn-glycero-3-phosphoethanolamine + 1,2-dihexadecanoyl-sn-glycero-3-phosphocholine. It catalyses the reaction 2 1-hexadecanoyl-sn-glycero-3-phosphoethanolamine = 1,2-dihexadecanoyl-sn-glycero-3-phosphoethanolamine + sn-glycero-3-phosphoethanolamine. The catalysed reaction is 1-O-hexadecyl-sn-glycero-3-phosphocholine + 1-hexadecanoyl-sn-glycero-3-phosphocholine = 1-O-hexadecyl-2-hexadecanoyl-sn-glycero-3-phosphocholine + sn-glycerol 3-phosphocholine. It carries out the reaction a 1-O-(1Z-alkenyl)-sn-glycero-3-phosphoethanolamine + 1-hexadecanoyl-sn-glycero-3-phosphocholine = 1-O-(1Z)-alkenyl-2-hexadecanoyl-sn-glycero-3-phosphoethanolamine + sn-glycerol 3-phosphocholine. The enzyme catalyses 1-O-hexadecyl-sn-glycero-3-phosphocholine + 1-hexadecanoyl-sn-glycero-3-phosphoethanolamine = 1-O-hexadecyl-2-hexadecanoyl-sn-glycero-3-phosphocholine + sn-glycero-3-phosphoethanolamine. It catalyses the reaction 1-octadecanoyl-2-(5Z,8Z,11Z,14Z)-eicosatetraenoyl-sn-glycero-3-phosphoethanolamine + 1-hexadecanoyl-sn-glycero-3-phosphocholine = 1-octadecanoyl-sn-glycero-3-phosphoethanolamine + 1-hexadecanoyl-2-(5Z,8Z,11Z,14Z-eicosatetraenoyl)-sn-glycero-3-phosphocholine. The catalysed reaction is 1-octadecanoyl-2-(5Z,8Z,11Z,14Z)-eicosatetraenoyl-sn-glycero-3-phosphoethanolamine + 1-O-hexadecyl-sn-glycero-3-phosphocholine = 1-octadecanoyl-sn-glycero-3-phosphoethanolamine + 1-O-hexadecyl-2-(5Z,8Z,11Z,14Z)-eicosatetraenoyl-sn-glycero-3-phosphocholine. It carries out the reaction 1-hexadecanoyl-2-(9Z,12Z-octadecadienoyl)-sn-glycero-3-phosphocholine + a 1-O-(1Z-alkenyl)-sn-glycero-3-phosphoethanolamine = 1-O-(1Z-alkenyl)-2-(9Z,12Z-octadecadienoyl)-sn-glycero-3-phosphoethanolamine + 1-hexadecanoyl-sn-glycero-3-phosphocholine. The enzyme catalyses 1-hexadecanoyl-2-(5Z,8Z,11Z,14Z-eicosatetraenoyl)-sn-glycero-3-phosphocholine + a 1-O-(1Z-alkenyl)-sn-glycero-3-phosphoethanolamine = 1-O-(1Z)-alkenyl-2-(5Z,8Z,11Z,14Z)-eicosatetraenoyl-sn-glycero-3-phosphoethanolamine + 1-hexadecanoyl-sn-glycero-3-phosphocholine. Its function is as follows. Calcium-independent phospholipase, lysophospholipase and O-acyltransferase involved in phospholipid remodeling. Preferentially hydrolyzes the ester bond of the fatty acyl group attached at sn-2 position of phospholipids with choline and ethanolamine head groups, producing lysophospholipids that are used in deacylation-reacylation cycles. Transfers the sn-1 fatty acyl from one lysophospholipid molecule to the sn-2 position of another lysophospholipid to form diacyl, alkylacyl and alkenylacyl glycerophospholipids. Cleaves ester bonds but not alkyl or alkenyl ether bonds at the sn-1 position of lysophospholipids. Catalyzes sn-2 fatty acyl transfer from phospholipids to the sn-2 position of 1-O-alkyl or 1-O-alkenyl lysophospholipids with lower efficiency. The protein is Cytosolic phospholipase A2 gamma of Mus musculus (Mouse).